Consider the following 130-residue polypeptide: Small ribosomal subunit protein uS9 (130 aa).

It belongs to the universal ribosomal protein uS9 family.

The chain is Small ribosomal subunit protein uS9 from Shewanella loihica (strain ATCC BAA-1088 / PV-4).